A 416-amino-acid polypeptide reads, in one-letter code: Serine protease inhibitor A3K (416 aa).

Positions 1–20 (MAFIAALGLLMAGICPAVLC) are cleaved as a signal peptide. N-linked (GlcNAc...) asparagine glycans are attached at residues N102, N182, N220, and N267. The segment at 365 to 392 (GTEGAAATAVTAALKSLPQTIPLLNFNR) is RCL.

It belongs to the serpin family. In terms of processing, N-glycosylated. Liver and plasma.

The protein localises to the secreted. Binds to and inhibits kallikreins. Inhibits trypsin but not chymotrypsin or elastase. The polypeptide is Serine protease inhibitor A3K (Serpina3k) (Rattus norvegicus (Rat)).